The primary structure comprises 395 residues: Probable L-tyrosine/L-aspartate decarboxylase (395 aa).

Lys-242 carries the post-translational modification N6-(pyridoxal phosphate)lysine.

The protein belongs to the group II decarboxylase family. MfnA subfamily. It depends on pyridoxal 5'-phosphate as a cofactor.

The catalysed reaction is L-tyrosine + H(+) = tyramine + CO2. The enzyme catalyses L-aspartate + H(+) = beta-alanine + CO2. It functions in the pathway cofactor biosynthesis; methanofuran biosynthesis. Its pathway is cofactor biosynthesis; coenzyme A biosynthesis. In terms of biological role, catalyzes the decarboxylation of L-tyrosine to produce tyramine for methanofuran biosynthesis. Can also catalyze the decarboxylation of L-aspartate to produce beta-alanine for coenzyme A (CoA) biosynthesis. This chain is Probable L-tyrosine/L-aspartate decarboxylase, found in Methanosarcina barkeri (strain Fusaro / DSM 804).